Reading from the N-terminus, the 440-residue chain is 3-phosphoshikimate 1-carboxyvinyltransferase (440 aa).

3-phosphoshikimate-binding residues include K31, S32, and R36. Position 31 (K31) interacts with phosphoenolpyruvate. Residues G104 and R133 each contribute to the phosphoenolpyruvate site. S178, Q180, D328, and K355 together coordinate 3-phosphoshikimate. Q180 provides a ligand contact to phosphoenolpyruvate. D328 functions as the Proton acceptor in the catalytic mechanism. Residues R359 and R401 each contribute to the phosphoenolpyruvate site.

The protein belongs to the EPSP synthase family. As to quaternary structure, monomer.

The protein localises to the cytoplasm. It carries out the reaction 3-phosphoshikimate + phosphoenolpyruvate = 5-O-(1-carboxyvinyl)-3-phosphoshikimate + phosphate. Its pathway is metabolic intermediate biosynthesis; chorismate biosynthesis; chorismate from D-erythrose 4-phosphate and phosphoenolpyruvate: step 6/7. Catalyzes the transfer of the enolpyruvyl moiety of phosphoenolpyruvate (PEP) to the 5-hydroxyl of shikimate-3-phosphate (S3P) to produce enolpyruvyl shikimate-3-phosphate and inorganic phosphate. The chain is 3-phosphoshikimate 1-carboxyvinyltransferase from Thermosynechococcus vestitus (strain NIES-2133 / IAM M-273 / BP-1).